The sequence spans 662 residues: MINHITDNQFKLVSKYQPSGDQPQAIEQLVDNIEGGEKAQILMGATGTGKTYTMSQVISKVNKPTLVIAHNKTLAGQLYGEFKEFFPENAVEYFVSYYDYYQPEAYVPSSDTYIEKDSSVNDEIDKLRHSATSALLERNDVIVVASVSCIYGLGSPKEYADSVVSLRPGLEISRDKLLNDLVDIQFERNDIDFQRGRFRVRGDVVEIFPASRDEHAFRVEFFGDEIDRIREVEALTGQVLGEVDHLAIFPATHFVTNDDHMEVAVAKIQAELEEQLAVFEKEGKLLEAQRLKQRTEYDIEMLREMGYTNGVENYSRHMDGRSEGEPPYTLLDFFPDDFLIMIDESHMTMGQIKGMYNGDRSRKEMLVNYGFRLPSALDNRPLRREEFESHVHQIVYVSATPGDYENEQTETVIEQIIRPTGLLDPEVEVRPTMGQIDDLLGEINARVEKNERTFITTLTKKMAEDLTDYFKEMGIKVKYMHSDIKTLERTEIIRDLRLGVFDVLVGINLLREGIDVPEVSLVAILDADKEGFLRNERGLIQTIGRAARNSEGHVIMYADTVTQSMQRAIDETARRRKIQMAYNEEHGIVPQTIKKEIRDLIAVTKAVAKEEDKEVDINSLNKQERKELVKKLEKQMQEAVEVLDFELAAQIRDMMLEVKALD.

The Helicase ATP-binding domain maps to 31 to 188; sequence DNIEGGEKAQ…NDLVDIQFER (158 aa). Position 44–51 (44–51) interacts with ATP; it reads GATGTGKT. The short motif at 97 to 120 is the Beta-hairpin element; that stretch reads YYDYYQPEAYVPSSDTYIEKDSSV. The Helicase C-terminal domain occupies 435–601; sequence QIDDLLGEIN…TIKKEIRDLI (167 aa). In terms of domain architecture, UVR spans 626–661; that stretch reads KELVKKLEKQMQEAVEVLDFELAAQIRDMMLEVKAL.

The protein belongs to the UvrB family. Forms a heterotetramer with UvrA during the search for lesions. Interacts with UvrC in an incision complex.

It localises to the cytoplasm. In terms of biological role, the UvrABC repair system catalyzes the recognition and processing of DNA lesions. A damage recognition complex composed of 2 UvrA and 2 UvrB subunits scans DNA for abnormalities. Upon binding of the UvrA(2)B(2) complex to a putative damaged site, the DNA wraps around one UvrB monomer. DNA wrap is dependent on ATP binding by UvrB and probably causes local melting of the DNA helix, facilitating insertion of UvrB beta-hairpin between the DNA strands. Then UvrB probes one DNA strand for the presence of a lesion. If a lesion is found the UvrA subunits dissociate and the UvrB-DNA preincision complex is formed. This complex is subsequently bound by UvrC and the second UvrB is released. If no lesion is found, the DNA wraps around the other UvrB subunit that will check the other stand for damage. The polypeptide is UvrABC system protein B (Streptococcus pneumoniae serotype 19F (strain G54)).